The following is a 176-amino-acid chain: MNTCTPNIKSSYTYEDLLASGRGELFGKEGPQLPAPTMLMMDRINLMTENGGLFDKGYIEAELDIHPDLPFFSCHFIGDPVMPGCLGLDAMWQLVGFFLGWIGGKGKGRALGVGEVKFTGQILPNAKKVTYRIHMKRVINRKLVMGMADGEVEVDGRVIYTATDLKVGLFQDTSAF.

H75 is an active-site residue.

It belongs to the thioester dehydratase family. FabA subfamily. In terms of assembly, homodimer.

It is found in the cytoplasm. The enzyme catalyses a (3R)-hydroxyacyl-[ACP] = a (2E)-enoyl-[ACP] + H2O. It carries out the reaction (3R)-hydroxydecanoyl-[ACP] = (2E)-decenoyl-[ACP] + H2O. It catalyses the reaction (2E)-decenoyl-[ACP] = (3Z)-decenoyl-[ACP]. It participates in lipid metabolism; fatty acid biosynthesis. Its function is as follows. Necessary for the introduction of cis unsaturation into fatty acids. Catalyzes the dehydration of (3R)-3-hydroxydecanoyl-ACP to E-(2)-decenoyl-ACP and then its isomerization to Z-(3)-decenoyl-ACP. Can catalyze the dehydratase reaction for beta-hydroxyacyl-ACPs with saturated chain lengths up to 16:0, being most active on intermediate chain length. In Actinobacillus pleuropneumoniae serotype 5b (strain L20), this protein is 3-hydroxydecanoyl-[acyl-carrier-protein] dehydratase.